A 268-amino-acid polypeptide reads, in one-letter code: Undecaprenyl-diphosphatase (268 aa).

Helical transmembrane passes span 47 to 67 (FAVL…FAKL), 83 to 103 (FVIG…VAGS), 109 to 129 (LFNP…LLWV), 144 to 164 (FPLP…IPGV), 184 to 204 (AAEF…VYDF), 218 to 238 (IVAI…KTFL), and 246 to 266 (FELF…ALAM).

The protein belongs to the UppP family.

It localises to the cell inner membrane. The enzyme catalyses di-trans,octa-cis-undecaprenyl diphosphate + H2O = di-trans,octa-cis-undecaprenyl phosphate + phosphate + H(+). Its function is as follows. Catalyzes the dephosphorylation of undecaprenyl diphosphate (UPP). Confers resistance to bacitracin. In Rhodopseudomonas palustris (strain BisB5), this protein is Undecaprenyl-diphosphatase.